The following is a 308-amino-acid chain: Acetyl-coenzyme A carboxylase carboxyl transferase subunit beta (308 aa).

Residues 25 to 294 (VWTKCTSCEQ…PLVVSVNDAP (270 aa)) form the CoA carboxyltransferase N-terminal domain. Zn(2+)-binding residues include Cys-29, Cys-32, Cys-48, and Cys-51. Residues 29–51 (CTSCEQVLYYAELERNLEVCPKC) form a C4-type zinc finger.

This sequence belongs to the AccD/PCCB family. As to quaternary structure, acetyl-CoA carboxylase is a heterohexamer composed of biotin carboxyl carrier protein (AccB), biotin carboxylase (AccC) and two subunits each of ACCase subunit alpha (AccA) and ACCase subunit beta (AccD). It depends on Zn(2+) as a cofactor.

The protein localises to the cytoplasm. The catalysed reaction is N(6)-carboxybiotinyl-L-lysyl-[protein] + acetyl-CoA = N(6)-biotinyl-L-lysyl-[protein] + malonyl-CoA. Its pathway is lipid metabolism; malonyl-CoA biosynthesis; malonyl-CoA from acetyl-CoA: step 1/1. In terms of biological role, component of the acetyl coenzyme A carboxylase (ACC) complex. Biotin carboxylase (BC) catalyzes the carboxylation of biotin on its carrier protein (BCCP) and then the CO(2) group is transferred by the transcarboxylase to acetyl-CoA to form malonyl-CoA. In Vibrio cholerae serotype O1 (strain ATCC 39315 / El Tor Inaba N16961), this protein is Acetyl-coenzyme A carboxylase carboxyl transferase subunit beta.